We begin with the raw amino-acid sequence, 494 residues long: One cut domain family member 3 (494 aa).

Disordered stretches follow at residues 130–162, 199–239, and 295–319; these read AAAV…RLAA, LSPL…GDKL, and AHGP…AAAE. 2 stretches are compositionally biased toward pro residues: residues 148–158 and 214–225; these read AAAPPPPPPPQ and PQPPPPPPPPPL. The span at 297–313 shows a compositional bias: gly residues; that stretch reads GPHGGGGGPGGSGGGPS. Residues 312–398 constitute a DNA-binding region (CUT); sequence PSAGAAAEEI…QRMSALRLAA (87 aa). The segment at residues 414-473 is a DNA-binding region (homeobox); the sequence is PKKQRLVFTDLQRRTLIAIFKENKRPSKEMQVTISQQLGLELNTVSNFFMNARRRCMNRW. The segment at 475–494 is disordered; sequence EEPSTAPGGPAGATATFSKA. The span at 476 to 494 shows a compositional bias: low complexity; the sequence is EPSTAPGGPAGATATFSKA.

Belongs to the CUT homeobox family.

Its subcellular location is the nucleus. Transcriptional activator. Binds the consensus DNA sequence 5'-DHWATTGAYTWWD-3' on a variety of gene promoters such as those of HNF3B and TTR. The protein is One cut domain family member 3 (ONECUT3) of Homo sapiens (Human).